Reading from the N-terminus, the 1046-residue chain is Hemoglobin-haptoglobin-binding protein A (1046 aa).

A signal peptide spans 1 to 24; it reads MTNFRLNLLAYSVMLGLTAGVAYA. A run of 4 repeats spans residues 26–29, 30–33, 34–37, and 38–41. The 4 X 4 AA tandem repeats of Q-P-T-N stretch occupies residues 26 to 41; that stretch reads QPTNQPTNQPTNQPTN. A TonB box motif is present at residues 51–58; sequence EQINVLGS. The TBDR plug domain occupies 61–188; sequence HNDNTPPKIA…LGGSVSFDTK (128 aa). Positions 196–1046 constitute a TBDR beta-barrel domain; that stretch reads NKNYYASYKR…NYRMSVQFEF (851 aa). Positions 1029–1046 match the TonB C-terminal box motif; that stretch reads NRFYAPGRNYRMSVQFEF.

Belongs to the TonB-dependent receptor family. Hemoglobin/haptoglobin binding protein subfamily.

Its subcellular location is the cell outer membrane. Its function is as follows. Acts as a receptor for the hemoglobin/haptoglobin complex of the human host and is required for heme uptake. Does not bind hemoglobin alone. The chain is Hemoglobin-haptoglobin-binding protein A (hhuA) from Haemophilus influenzae.